A 20-amino-acid chain; its full sequence is Glutathione S-transferase 2 (20 aa).

Residues 1 to 20 form the GST N-terminal domain; the sequence is GYKVTYFAIRGLAEPIXLLL. Tyr-6 is a glutathione binding site.

It belongs to the GST superfamily. Sigma family.

It carries out the reaction RX + glutathione = an S-substituted glutathione + a halide anion + H(+). In terms of biological role, conjugation of reduced glutathione to a wide number of exogenous and endogenous hydrophobic electrophiles. The sequence is that of Glutathione S-transferase 2 (GST2) from Ascaris suum (Pig roundworm).